Here is a 486-residue protein sequence, read N- to C-terminus: Glutamyl-tRNA(Gln) amidotransferase subunit A (486 aa).

Active-site charge relay system residues include Lys74 and Ser149. Ser173 functions as the Acyl-ester intermediate in the catalytic mechanism.

The protein belongs to the amidase family. GatA subfamily. In terms of assembly, heterotrimer of A, B and C subunits.

It catalyses the reaction L-glutamyl-tRNA(Gln) + L-glutamine + ATP + H2O = L-glutaminyl-tRNA(Gln) + L-glutamate + ADP + phosphate + H(+). Its function is as follows. Allows the formation of correctly charged Gln-tRNA(Gln) through the transamidation of misacylated Glu-tRNA(Gln) in organisms which lack glutaminyl-tRNA synthetase. The reaction takes place in the presence of glutamine and ATP through an activated gamma-phospho-Glu-tRNA(Gln). The polypeptide is Glutamyl-tRNA(Gln) amidotransferase subunit A (Prochlorococcus marinus (strain MIT 9313)).